We begin with the raw amino-acid sequence, 52 residues long: uncharacterized protein (52 aa).

This is an uncharacterized protein from Bos taurus papillomavirus 4 (Bovine papillomavirus 4).